Consider the following 60-residue polypeptide: Three-finger toxin MS3 (60 aa).

Disulfide bonds link cysteine 3-cysteine 22, cysteine 15-cysteine 39, cysteine 41-cysteine 52, and cysteine 53-cysteine 58.

It belongs to the three-finger toxin family. Short-chain subfamily. Type I alpha-neurotoxin sub-subfamily. As to expression, expressed by the venom gland.

The protein localises to the secreted. Produces peripheral paralysis by blocking neuromuscular transmission at the postsynaptic site. Binds to and inhibits the endogenous nicotinic acetylcholine receptors (nAChR) in human rhabdomyosarcoma TE 671 cell line with an IC(50) of 346 mM. This neurotoxin is lethal to mice by intraperitoneal injection and to zebrafish by injection at the back of the dorsolateral region. This is Three-finger toxin MS3 from Micrurus surinamensis (Surinam coral snake).